Consider the following 246-residue polypeptide: Sensory transduction protein LytT (246 aa).

The 115-residue stretch at 3–117 (KVLVVDDEML…RIVQTLKKYK (115 aa)) folds into the Response regulatory domain. Position 54 is a 4-aspartylphosphate (Asp54). One can recognise an HTH LytTR-type domain in the interval 142–246 (LALPIEESIV…AKELKKLLRI (105 aa)).

Phosphorylated by LytS.

It localises to the cytoplasm. Functionally, member of the two-component regulatory system LytS/LytT that probably regulates genes involved in cell wall metabolism. This Bacillus anthracis protein is Sensory transduction protein LytT (lytT).